A 456-amino-acid polypeptide reads, in one-letter code: Multidrug resistance protein NorM (456 aa).

12 helical membrane passes run 11–31 (LIKL…MGFV), 53–73 (IWLP…PVVA), 92–112 (VVLA…TQFI), 126–146 (TVGY…FQTL), 159–179 (AMVI…IFVY), 189–209 (GVGC…LLLA), 242–262 (FPVA…ALLV), 268–288 (IIVA…MLPM), 314–334 (SRVG…ITVL), 356–376 (LLLF…AAGA), 385–405 (AIFN…GYIL), and 417–437 (AQGF…MLGV).

Belongs to the multi antimicrobial extrusion (MATE) (TC 2.A.66.1) family.

The protein localises to the cell inner membrane. Multidrug efflux pump that functions as a Na(+)/drug antiporter. Confers resistance to several drugs, such as norfloxacin, ciprofloxacin, ethidium, kanamycin and streptomycin. The polypeptide is Multidrug resistance protein NorM (norM) (Vibrio parahaemolyticus serotype O3:K6 (strain RIMD 2210633)).